Here is a 152-residue protein sequence, read N- to C-terminus: Interleukin-3 (152 aa).

An N-terminal signal peptide occupies residues 1 to 19 (MSCLPVLLLLQLLVSPGLQ). N-linked (GlcNAc...) asparagine glycans are attached at residues Asn34 and Asn89. The cysteines at positions 35 and 103 are disulfide-linked.

It belongs to the IL-3 family. As to quaternary structure, monomer. As to expression, activated T-cells, mast cells, natural killer cells.

The protein resides in the secreted. Functionally, granulocyte/macrophage colony-stimulating factors are cytokines that act in hematopoiesis by controlling the production, differentiation, and function of 2 related white cell populations of the blood, the granulocytes and the monocytes-macrophages. This CSF induces granulocytes, macrophages, mast cells, stem cells, erythroid cells, eosinophils and megakaryocytes. The chain is Interleukin-3 (IL3) from Hylobates lar (Lar gibbon).